Here is a 213-residue protein sequence, read N- to C-terminus: Pyrrolidone-carboxylate peptidase (213 aa).

Active-site residues include E78, C141, and H165.

This sequence belongs to the peptidase C15 family. As to quaternary structure, homotetramer.

It is found in the cytoplasm. It catalyses the reaction Release of an N-terminal pyroglutamyl group from a polypeptide, the second amino acid generally not being Pro.. In terms of biological role, removes 5-oxoproline from various penultimate amino acid residues except L-proline. This chain is Pyrrolidone-carboxylate peptidase, found in Clostridium perfringens (strain SM101 / Type A).